Reading from the N-terminus, the 319-residue chain is Ribonucleoside-diphosphate reductase small chain (319 aa).

The Fe cation site is built by Asp70, Glu101, and His104. Tyr108 is an active-site residue. Positions 163, 197, and 200 each coordinate Fe cation. Residues 313 to 319 are interaction with R1; it reads FSLDVDF.

The protein belongs to the ribonucleoside diphosphate reductase small chain family. In terms of assembly, interacts with RNR1/OPG080 subunit. Can interact with host RNR1 supunit. Fe cation is required as a cofactor.

It carries out the reaction a 2'-deoxyribonucleoside 5'-diphosphate + [thioredoxin]-disulfide + H2O = a ribonucleoside 5'-diphosphate + [thioredoxin]-dithiol. In terms of biological role, ribonucleoside-diphosphate reductase holoenzyme provides the precursors necessary for viral DNA synthesis. Allows virus growth in non-dividing cells. Catalyzes the biosynthesis of deoxyribonucleotides from the corresponding ribonucleotides. In Vaccinia virus (strain L-IVP) (VACV), this protein is Ribonucleoside-diphosphate reductase small chain (OPG048).